The following is a 672-amino-acid chain: Glycerophosphocholine phosphodiesterase GPCPD1 (672 aa).

The region spanning 1–113 (MTPSQVTFEI…IIIDDGQFGI (113 aa)) is the CBM20 domain. Substrate is bound by residues arginine 68 and 86 to 87 (HK). At serine 175 the chain carries Phosphoserine. A GP-PDE domain is found at 318–618 (PLDVGHRGAG…DRIYDWMPEQ (301 aa)). The residue at position 608 (tyrosine 608) is a Phosphotyrosine.

The protein belongs to the glycerophosphoryl diester phosphodiesterase family.

It is found in the cytoplasm. It localises to the cytosol. The catalysed reaction is sn-glycerol 3-phosphocholine + H2O = sn-glycerol 3-phosphate + choline + H(+). In terms of biological role, may be involved in the negative regulation of skeletal muscle differentiation, independently of its glycerophosphocholine phosphodiesterase activity. The polypeptide is Glycerophosphocholine phosphodiesterase GPCPD1 (Gpcpd1) (Rattus norvegicus (Rat)).